The following is a 91-amino-acid chain: DNA-directed RNA polymerase subunit omega (91 aa).

This sequence belongs to the RNA polymerase subunit omega family. In terms of assembly, the RNAP catalytic core consists of 2 alpha, 1 beta, 1 beta' and 1 omega subunit. When a sigma factor is associated with the core the holoenzyme is formed, which can initiate transcription.

It catalyses the reaction RNA(n) + a ribonucleoside 5'-triphosphate = RNA(n+1) + diphosphate. In terms of biological role, promotes RNA polymerase assembly. Latches the N- and C-terminal regions of the beta' subunit thereby facilitating its interaction with the beta and alpha subunits. This chain is DNA-directed RNA polymerase subunit omega, found in Pectobacterium carotovorum subsp. carotovorum (strain PC1).